The sequence spans 227 residues: Protein GrpE (227 aa).

The span at 1-18 (MTQGNQKTEGNPPEQVTV) shows a compositional bias: polar residues. 2 disordered regions span residues 1-57 (MTQG…GAAT) and 193-227 (TEEG…ASGD). Over residues 19–35 (TDKRRIDPETGEVRHVP) the composition is skewed to basic and acidic residues. Low complexity-rich tracts occupy residues 41–50 (GGTAPQAATA) and 199–213 (EAAA…AAET).

The protein belongs to the GrpE family. As to quaternary structure, homodimer.

Its subcellular location is the cytoplasm. Participates actively in the response to hyperosmotic and heat shock by preventing the aggregation of stress-denatured proteins, in association with DnaK and GrpE. It is the nucleotide exchange factor for DnaK and may function as a thermosensor. Unfolded proteins bind initially to DnaJ; upon interaction with the DnaJ-bound protein, DnaK hydrolyzes its bound ATP, resulting in the formation of a stable complex. GrpE releases ADP from DnaK; ATP binding to DnaK triggers the release of the substrate protein, thus completing the reaction cycle. Several rounds of ATP-dependent interactions between DnaJ, DnaK and GrpE are required for fully efficient folding. This is Protein GrpE from Mycolicibacterium paratuberculosis (strain ATCC BAA-968 / K-10) (Mycobacterium paratuberculosis).